The sequence spans 76 residues: Cytochrome c oxidase subunit 6C-1 (76 aa).

Over 4-14 the chain is Mitochondrial matrix; that stretch reads GALLPKPQMHD. Residues 15-55 traverse the membrane as a helical segment; that stretch reads PLSKRLWVHIVGAFIVDLGVAAAHKFGAAKPRKKAYADFYR. Residues 56–76 lie on the Mitochondrial intermembrane side of the membrane; sequence NHDPMKDFDEMRKAGVFRSVK.

The protein belongs to the cytochrome c oxidase subunit 6c family. In terms of assembly, component of the cytochrome c oxidase (complex IV, CIV), a multisubunit enzyme composed of 14 subunits. The complex is composed of a catalytic core of 3 subunits MT-CO1, MT-CO2 and MT-CO3, encoded in the mitochondrial DNA, and 11 supernumerary subunits COX4I, COX5A, COX5B, COX6A, COX6B, COX6C, COX7A, COX7B, COX7C, COX8 and NDUFA4, which are encoded in the nuclear genome. The complex exists as a monomer or a dimer and forms supercomplexes (SCs) in the inner mitochondrial membrane with NADH-ubiquinone oxidoreductase (complex I, CI) and ubiquinol-cytochrome c oxidoreductase (cytochrome b-c1 complex, complex III, CIII), resulting in different assemblies (supercomplex SCI(1)III(2)IV(1) and megacomplex MCI(2)III(2)IV(2)).

It localises to the mitochondrion inner membrane. The protein operates within energy metabolism; oxidative phosphorylation. Functionally, component of the cytochrome c oxidase, the last enzyme in the mitochondrial electron transport chain which drives oxidative phosphorylation. The respiratory chain contains 3 multisubunit complexes succinate dehydrogenase (complex II, CII), ubiquinol-cytochrome c oxidoreductase (cytochrome b-c1 complex, complex III, CIII) and cytochrome c oxidase (complex IV, CIV), that cooperate to transfer electrons derived from NADH and succinate to molecular oxygen, creating an electrochemical gradient over the inner membrane that drives transmembrane transport and the ATP synthase. Cytochrome c oxidase is the component of the respiratory chain that catalyzes the reduction of oxygen to water. Electrons originating from reduced cytochrome c in the intermembrane space (IMS) are transferred via the dinuclear copper A center (CU(A)) of subunit 2 and heme A of subunit 1 to the active site in subunit 1, a binuclear center (BNC) formed by heme A3 and copper B (CU(B)). The BNC reduces molecular oxygen to 2 water molecules using 4 electrons from cytochrome c in the IMS and 4 protons from the mitochondrial matrix. The protein is Cytochrome c oxidase subunit 6C-1 (Cox6c1) of Rattus norvegicus (Rat).